We begin with the raw amino-acid sequence, 253 residues long: Large ribosomal subunit protein uL2C (253 aa).

The protein belongs to the universal ribosomal protein uL2 family. In terms of assembly, component of the large ribosomal subunit (LSU). Mature yeast ribosomes consist of a small (40S) and a large (60S) subunit. The 40S small subunit contains 1 molecule of ribosomal RNA (18S rRNA) and at least 33 different proteins. The large 60S subunit contains 3 rRNA molecules (25S, 5.8S and 5S rRNA) and at least 46 different proteins.

The protein localises to the cytoplasm. The protein resides in the nucleus. Functionally, component of the ribosome, a large ribonucleoprotein complex responsible for the synthesis of proteins in the cell. The small ribosomal subunit (SSU) binds messenger RNAs (mRNAs) and translates the encoded message by selecting cognate aminoacyl-transfer RNA (tRNA) molecules. The large subunit (LSU) contains the ribosomal catalytic site termed the peptidyl transferase center (PTC), which catalyzes the formation of peptide bonds, thereby polymerizing the amino acids delivered by tRNAs into a polypeptide chain. The nascent polypeptides leave the ribosome through a tunnel in the LSU and interact with protein factors that function in enzymatic processing, targeting, and the membrane insertion of nascent chains at the exit of the ribosomal tunnel. The chain is Large ribosomal subunit protein uL2C (rpl803) from Schizosaccharomyces pombe (strain 972 / ATCC 24843) (Fission yeast).